The following is a 933-amino-acid chain: Progesterone receptor (933 aa).

Residues 1–157 (MTELKAKGPR…PEDPPAAPAT (157 aa)) are disordered. The interval 1-164 (MTELKAKGPR…PATQRVLSPL (164 aa)) is AF3; mediates transcriptional activation (in isoform B). The tract at residues 1 to 566 (MTELKAKGPR…YSFESLPQKI (566 aa)) is modulating, Pro-Rich. Residue Lys-7 forms a Glycyl lysine isopeptide (Lys-Gly) (interchain with G-Cter in SUMO) linkage. Ser-20 carries the phosphoserine modification. An LXXL motif 1 motif is present at residues 55 to 59 (LDGLL). Phosphoserine is present on residues Ser-81 and Ser-102. The short motif at 115–119 (LDTLL) is the LXXL motif 2 element. 2 positions are modified to phosphoserine: Ser-130 and Ser-162. Residues 165–305 (MSRSGCKVGD…LATTVMDFIH (141 aa)) are mediates transcriptional transrepression (in isoform A). Residues 183 to 187 (KVLPR) carry the Nuclear localization signal motif. 2 positions are modified to phosphoserine: Ser-190 and Ser-213. The segment at 195–241 (LLLPASESPHWSGAPVKPSPQAAAVEVEEEDGSESEESAGPLLKGKP) is disordered. Residues 220–231 (EVEEEDGSESEE) show a composition bias toward acidic residues. Over residues 232–241 (SAGPLLKGKP) the composition is skewed to low complexity. A Phosphoserine; by MAPK1 modification is found at Ser-294. Residues 331–351 (GGAGAASAFAPPRSSPCASST) form a disordered region. The segment covering 335-350 (AASAFAPPRSSPCASS) has biased composition (low complexity). Residue Ser-345 is modified to Phosphoserine; by MAPK. Lys-388 participates in a covalent cross-link: Glycyl lysine isopeptide (Lys-Gly) (interchain with G-Cter in SUMO); alternate. Lys-388 is covalently cross-linked (Glycyl lysine isopeptide (Lys-Gly) (interchain with G-Cter in ubiquitin); alternate). A Phosphoserine; by CDK2 modification is found at Ser-400. Residues 415-452 (PDFPLGPPPPLPPRATPSRPGEAAVTAAPASASVSSAS) are disordered. The span at 418 to 429 (PLGPPPPLPPRA) shows a compositional bias: pro residues. Residues 430-452 (TPSRPGEAAVTAAPASASVSSAS) are compositionally biased toward low complexity. The segment at 456–546 (STLECILYKA…VYPPYLNYLR (91 aa)) is AF1; mediates transcriptional activation. Lys-531 is covalently cross-linked (Glycyl lysine isopeptide (Lys-Gly) (interchain with G-Cter in SUMO)). NR C4-type zinc fingers lie at residues 567 to 587 (CLIC…CGSC) and 603 to 627 (CAGR…LRKC). A DNA-binding region (nuclear receptor) is located at residues 567–639 (CLICGDEASG…AGMVLGGRKF (73 aa)). Ser-676 is modified (phosphoserine). The NR LBD domain maps to 679-913 (QDIQLIPPLI…EFPEMMSEVI (235 aa)). The interval 687 to 933 (LINLLMSIEP…MVKPLLFHKK (247 aa)) is AF2; mediates transcriptional activation. Arg-766 provides a ligand contact to progesterone.

This sequence belongs to the nuclear hormone receptor family. NR3 subfamily. In terms of assembly, interacts with SMARD1 and UNC45A. Interacts with CUEDC2; the interaction promotes ubiquitination, decreases sumoylation, and represses transcriptional activity. Interacts with PIAS3; the interaction promotes sumoylation of PR in a hormone-dependent manner, inhibits DNA-binding, and alters nuclear export. Interacts with SP1; the interaction requires ligand-induced phosphorylation on Ser-345 by ERK1/2 MAPK. Interacts with PRMT2. Isoform A interacts with NCOR2. Isoform B (but not isoform A) interacts with NCOA2 and NCOA1. Isoform B (but not isoform A) interacts with KLF9. Interacts with GTF2B. Post-translationally, phosphorylated on multiple serine sites. Several of these sites are hormone-dependent. Phosphorylation on Ser-294 occurs preferentially on isoform B, is highly hormone-dependent and modulates ubiquitination and sumoylation on Lys-388. Phosphorylation on Ser-102 and Ser-345 also requires induction by hormone. Basal phosphorylation on Ser-81, Ser-162, Ser-190 and Ser-400 is increased in response to progesterone and can be phosphorylated in vitro by the CDK2-A1 complex. Increased levels of phosphorylation on Ser-400 also in the presence of EGF, heregulin, IGF, PMA and FBS. Phosphorylation at this site by CDK2 is ligand-independent, and increases nuclear translocation and transcriptional activity. Phosphorylation at Ser-162 and Ser-294, but not at Ser-190, is impaired during the G(2)/M phase of the cell cycle. Phosphorylation on Ser-345 by ERK1/2 MAPK is required for interaction with SP1. Sumoylation is hormone-dependent and represses transcriptional activity. Sumoylation on all three sites is enhanced by PIAS3. Desumoylated by SENP1. Sumoylation on Lys-388, the main site of sumoylation, is repressed by ubiquitination on the same site, and modulated by phosphorylation at Ser-294. In terms of processing, ubiquitination is hormone-dependent and represses sumoylation on the same site. Promoted by MAPK-mediated phosphorylation on Ser-294. Ubiquitinated by UBR5, leading to its degradation: UBR5 specifically recognizes and binds ligand-bound PGR when it is not associated with coactivators (NCOAs). In presence of NCOAs, the UBR5-degron is not accessible, preventing its ubiquitination and degradation. Post-translationally, palmitoylated by ZDHHC7 and ZDHHC21. Palmitoylation is required for plasma membrane targeting and for rapid intracellular signaling via ERK and AKT kinases and cAMP generation. In reproductive tissues the expression of isoform A and isoform B varies as a consequence of developmental and hormonal status. Isoform A and isoform B are expressed in comparable levels in uterine glandular epithelium during the proliferative phase of the menstrual cycle. Expression of isoform B but not of isoform A persists in the glands during mid-secretory phase. In the stroma, isoform A is the predominant form throughout the cycle. Heterogeneous isoform expression between the glands of the endometrium basalis and functionalis is implying region-specific responses to hormonal stimuli.

The protein resides in the nucleus. The protein localises to the cytoplasm. Its subcellular location is the mitochondrion outer membrane. Functionally, the steroid hormones and their receptors are involved in the regulation of eukaryotic gene expression and affect cellular proliferation and differentiation in target tissues. Depending on the isoform, progesterone receptor functions as a transcriptional activator or repressor. Ligand-dependent transdominant repressor of steroid hormone receptor transcriptional activity including repression of its isoform B, MR and ER. Transrepressional activity may involve recruitment of corepressor NCOR2. Its function is as follows. Transcriptional activator of several progesteron-dependent promoters in a variety of cell types. Involved in activation of SRC-dependent MAPK signaling on hormone stimulation. In terms of biological role, increases mitochondrial membrane potential and cellular respiration upon stimulation by progesterone. This Homo sapiens (Human) protein is Progesterone receptor (PGR).